The primary structure comprises 164 residues: Cyanate hydratase (164 aa).

Catalysis depends on residues R90, E93, and S116.

It belongs to the cyanase family.

The enzyme catalyses cyanate + hydrogencarbonate + 3 H(+) = NH4(+) + 2 CO2. In terms of biological role, catalyzes the reaction of cyanate with bicarbonate to produce ammonia and carbon dioxide. In Vitis vinifera (Grape), this protein is Cyanate hydratase.